The sequence spans 118 residues: Large ribosomal subunit protein bL20 (118 aa).

This sequence belongs to the bacterial ribosomal protein bL20 family.

In terms of biological role, binds directly to 23S ribosomal RNA and is necessary for the in vitro assembly process of the 50S ribosomal subunit. It is not involved in the protein synthesizing functions of that subunit. This chain is Large ribosomal subunit protein bL20, found in Leptothrix cholodnii (strain ATCC 51168 / LMG 8142 / SP-6) (Leptothrix discophora (strain SP-6)).